Reading from the N-terminus, the 317-residue chain is SURF1-like protein (317 aa).

Transmembrane regions (helical) follow at residues 78-98 and 293-313; these read GSIL…WQIY and HMNY…MWIH.

It belongs to the SURF1 family.

The protein resides in the mitochondrion inner membrane. Functionally, probably involved in the biogenesis of the COX complex. In Caenorhabditis briggsae, this protein is SURF1-like protein (sft-1).